Consider the following 196-residue polypeptide: Pro-FMRFamide-related neuropeptide VF (196 aa).

An N-terminal signal peptide occupies residues 1–21; the sequence is MEIISLKRFILLMLATSSLLT. A propeptide spanning residues 22 to 57 is cleaved from the precursor; the sequence is SNIFCTDESRIPSLYSKKNYDKYSEPRGDLGWEKER. At phenylalanine 92 the chain carries Phenylalanine amide. Propeptides lie at residues 95–99 and 115–121; these read NMEEE and NREDSLS. Phenylalanine 131 carries the post-translational modification Phenylalanine amide. A propeptide spanning residues 134–196 is cleaved from the precursor; sequence TIAAKSITKT…IDDAELKQEK (63 aa).

The protein belongs to the FARP (FMRFamide related peptide) family. Expressed in hypothalamus, where it is localized to the dorsomedial hypothalamic nucleus (DMH), paraventricular nucleus (PVN), and to neuronal projections from the PVN to the neurosecretory zone of the median eminence.

It is found in the secreted. Functionally, may act in concert with kisspeptin, through opposing affects, to regulate the activity of gonadotropin-releasing hormone (GnRH) neurons across the seasons, leading to an annual change in fertility and the cyclical seasonal transition from non-breeding to breeding season. Efficiently inhibits forskolin-induced production of cAMP. Acts as a potent negative regulator of gonadotropin synthesis and secretion. Induces secretion of prolactin. Its function is as follows. Efficiently inhibits forskolin-induced production of cAMP. Blocks morphine-induced analgesia. In terms of biological role, shows no inhibitory activity of forskolin-induced production of cAMP. This Ovis aries (Sheep) protein is Pro-FMRFamide-related neuropeptide VF.